The primary structure comprises 436 residues: Chromosomal replication initiator protein DnaA (436 aa).

The interval 1–80 (MSHEAVWQHV…QAPRFELRVV (80 aa)) is domain I, interacts with DnaA modulators. A domain II region spans residues 80–100 (VPGVVVQEDIFQAAPAEAPRP). A domain III, AAA+ region region spans residues 101–317 (KLNPKYTFEN…GALMRAIAFA (217 aa)). The ATP site is built by glycine 145, glycine 147, lysine 148, and threonine 149. The segment at 318-436 (SLNGVELTRA…LLRTLREACT (119 aa)) is domain IV, binds dsDNA.

This sequence belongs to the DnaA family. As to quaternary structure, oligomerizes as a right-handed, spiral filament on DNA at oriC.

It is found in the cytoplasm. Plays an essential role in the initiation and regulation of chromosomal replication. ATP-DnaA binds to the origin of replication (oriC) to initiate formation of the DNA replication initiation complex once per cell cycle. Binds the DnaA box (a 9 base pair repeat at the origin) and separates the double-stranded (ds)DNA. Forms a right-handed helical filament on oriC DNA; dsDNA binds to the exterior of the filament while single-stranded (ss)DNA is stabiized in the filament's interior. The ATP-DnaA-oriC complex binds and stabilizes one strand of the AT-rich DNA unwinding element (DUE), permitting loading of DNA polymerase. After initiation quickly degrades to an ADP-DnaA complex that is not apt for DNA replication. Binds acidic phospholipids. This chain is Chromosomal replication initiator protein DnaA, found in Thermus thermophilus (strain ATCC BAA-163 / DSM 7039 / HB27).